The following is a 47-amino-acid chain: Capistruin (47 aa).

The propeptide occupies 1–28 (MVRLLAKLLRSTIHGSNGVSLDAVSSTH). A cross-link (isoaspartyl glycine isopeptide (Gly-Asp)) is located at residues 29-37 (GTPGFQTPD).

In terms of processing, it is assumed that the two processing enzymes CapB/CapC convert the precursor protein CapA into the mature lasso peptide capistruin. CapB is assumed to cleave the precursor protein CapA and to set an N-terminal Gly free, whose a-NH2 group acts as the nucleophile in the subsequent cyclization reaction. CapC is most likely involved in the side-chain carboxyl group activation of aspartic acid at position 9 generating the electrophile for the condensation reaction. CapD may export capistruin outside of the producing cells.

The protein localises to the secreted. In terms of biological role, peptide antibiotic that functions through inhibition of the bacterial DNA-dependent RNA polymerase (RNAP). Inhibits transcription by binding in RNAP secondary channel, where it sterically blocks the folding of the trigger loop, which is essential for efficient catalysis. In contrast to MccJ25, does not restrict access of nucleotide substrates to the catalytic center and shows a non-competitive mode of inhibition. Shows activity against closely related Gram-negative Burkholderia and Pseudomonas strains. Is not active against Gram-positive bacteria. The polypeptide is Capistruin (Burkholderia thailandensis (strain ATCC 700388 / DSM 13276 / CCUG 48851 / CIP 106301 / E264)).